The chain runs to 535 residues: Phosphoenolpyruvate carboxykinase (ATP) (535 aa).

Substrate contacts are provided by arginine 59, tyrosine 201, and lysine 207. ATP contacts are provided by residues lysine 207, histidine 226, and 243-251 (GLSGTGKTT). Mn(2+) is bound by residues lysine 207 and histidine 226. Aspartate 264 lines the Mn(2+) pocket. ATP is bound by residues glutamate 292, arginine 328, 444–445 (RI), and threonine 450. Substrate is bound at residue arginine 328.

The protein belongs to the phosphoenolpyruvate carboxykinase (ATP) family. It depends on Mn(2+) as a cofactor.

It localises to the cytoplasm. It catalyses the reaction oxaloacetate + ATP = phosphoenolpyruvate + ADP + CO2. It functions in the pathway carbohydrate biosynthesis; gluconeogenesis. Involved in the gluconeogenesis. Catalyzes the conversion of oxaloacetate (OAA) to phosphoenolpyruvate (PEP) through direct phosphoryl transfer between the nucleoside triphosphate and OAA. The protein is Phosphoenolpyruvate carboxykinase (ATP) of Parabacteroides distasonis (strain ATCC 8503 / DSM 20701 / CIP 104284 / JCM 5825 / NCTC 11152).